The following is a 69-amino-acid chain: uncharacterized protein (69 aa).

This is an uncharacterized protein from Saccharomyces cerevisiae (strain ATCC 204508 / S288c) (Baker's yeast).